Here is a 491-residue protein sequence, read N- to C-terminus: Bifunctional protein HldE (491 aa).

The ribokinase stretch occupies residues 1 to 330; the sequence is MDRKMVESLF…AAVSLEHRDS (330 aa). 205–208 is an ATP binding site; sequence NRKE. Asp-275 is an active-site residue. A cytidylyltransferase region spans residues 356–491; it reads FTNGCFDLLH…KVLERYTDEQ (136 aa).

It in the N-terminal section; belongs to the carbohydrate kinase PfkB family. In the C-terminal section; belongs to the cytidylyltransferase family. As to quaternary structure, homodimer.

It catalyses the reaction D-glycero-beta-D-manno-heptose 7-phosphate + ATP = D-glycero-beta-D-manno-heptose 1,7-bisphosphate + ADP + H(+). The enzyme catalyses D-glycero-beta-D-manno-heptose 1-phosphate + ATP + H(+) = ADP-D-glycero-beta-D-manno-heptose + diphosphate. The protein operates within nucleotide-sugar biosynthesis; ADP-L-glycero-beta-D-manno-heptose biosynthesis; ADP-L-glycero-beta-D-manno-heptose from D-glycero-beta-D-manno-heptose 7-phosphate: step 1/4. It participates in nucleotide-sugar biosynthesis; ADP-L-glycero-beta-D-manno-heptose biosynthesis; ADP-L-glycero-beta-D-manno-heptose from D-glycero-beta-D-manno-heptose 7-phosphate: step 3/4. Functionally, catalyzes the phosphorylation of D-glycero-D-manno-heptose 7-phosphate at the C-1 position to selectively form D-glycero-beta-D-manno-heptose-1,7-bisphosphate. Catalyzes the ADP transfer from ATP to D-glycero-beta-D-manno-heptose 1-phosphate, yielding ADP-D-glycero-beta-D-manno-heptose. The chain is Bifunctional protein HldE from Trichlorobacter lovleyi (strain ATCC BAA-1151 / DSM 17278 / SZ) (Geobacter lovleyi).